The chain runs to 217 residues: 3,4-dihydroxy-2-butanone 4-phosphate synthase (217 aa).

D-ribulose 5-phosphate-binding positions include 37-38 (RE), Asp42, 150-154 (RGGHT), and Glu174. Glu38 provides a ligand contact to Mg(2+). A Mg(2+)-binding site is contributed by His153.

Belongs to the DHBP synthase family. As to quaternary structure, homodimer. Requires Mg(2+) as cofactor. Mn(2+) is required as a cofactor.

It carries out the reaction D-ribulose 5-phosphate = (2S)-2-hydroxy-3-oxobutyl phosphate + formate + H(+). It functions in the pathway cofactor biosynthesis; riboflavin biosynthesis; 2-hydroxy-3-oxobutyl phosphate from D-ribulose 5-phosphate: step 1/1. In terms of biological role, catalyzes the conversion of D-ribulose 5-phosphate to formate and 3,4-dihydroxy-2-butanone 4-phosphate. This Shigella boydii serotype 18 (strain CDC 3083-94 / BS512) protein is 3,4-dihydroxy-2-butanone 4-phosphate synthase.